The chain runs to 623 residues: Calnexin (623 aa).

An N-terminal signal peptide occupies residues 1–21 (MLNRKWSFVFLTFLLVISVNA). Ca(2+) is bound at residue D108. C151 and C185 form a disulfide bridge. 4 residues coordinate an alpha-D-glucoside: Y155, K157, Y176, and D183. N202 carries N-linked (GlcNAc...) asparagine glycosylation. The tract at residues 260-337 (SLTPPKEIFD…QKPQDWDEDM (78 aa)) is disordered. A compositionally biased stretch (basic and acidic residues) spans 266–276 (EIFDETDLKPE). Positions 267-400 (IFDETDLKPE…RLIDNPNYFE (134 aa)) are p domain (Extended arm). Tandem repeats lie at residues 269–281 (DETD…WDER), 286–298 (DETA…WDEN), 305–317 (DESA…WNEE), 324–336 (DPEA…WDED), and 339–349 (GSWEAPLIDNP). 4 X approximate repeats regions lie at residues 269–336 (DETD…WDED) and 339–396 (GSWE…IDNP). 2 stretches are compositionally biased toward acidic residues: residues 277 to 287 (DWDEREQIEDE) and 314 to 323 (WNEEENELIP). Residues C351 and C357 are joined by a disulfide bond. Repeat copies occupy residues 358 to 368 (GTWKPPTIKNP), 372 to 382 (GKWVRPKIANP), and 386 to 396 (GKWSPRLIDNP). E416 contacts an alpha-D-glucoside. D427 is a Ca(2+) binding site. A helical transmembrane segment spans residues 480–500 (LWAVYILCILLPLIAIGVFCF). Positions 536-623 (IAEDEEDNQP…AKRRTARRGD (88 aa)) are disordered. A compositionally biased stretch (acidic residues) spans 556 to 565 (IDEDEQDEVE). The segment covering 566–581 (QQPSSSKTASSESSSA) has biased composition (low complexity). The span at 614-623 (AKRRTARRGD) shows a compositional bias: basic residues.

This sequence belongs to the calreticulin family. In terms of processing, glycosylation is important for its biological activity.

It localises to the endoplasmic reticulum membrane. Its subcellular location is the cytoplasm. The protein resides in the perinuclear region. It is found in the cytoplasmic vesicle. In terms of biological role, calcium-binding protein that interacts with newly synthesized monoglucosylated glycoproteins in the endoplasmic reticulum. It may act in assisting protein assembly and/or in the retention within the ER of unassembled protein subunits. It seems to play a major role in the quality control apparatus of the ER by the retention of incorrectly folded proteins. Required for embryogenesis and larval development under heat and ER stress conditions. May be important for germ cell development. Involved in neuronal necrotic cell death. The chain is Calnexin from Caenorhabditis briggsae.